We begin with the raw amino-acid sequence, 388 residues long: Succinate--CoA ligase [ADP-forming] subunit beta (388 aa).

In terms of domain architecture, ATP-grasp spans 9–244 (KSLFAEYGLP…PSQDDAREAH (236 aa)). ATP is bound by residues K46, 53 to 55 (GRG), E99, T102, and E107. Residues N199 and D213 each contribute to the Mg(2+) site. Substrate-binding positions include N264 and 321 to 323 (GIV).

It belongs to the succinate/malate CoA ligase beta subunit family. In terms of assembly, heterotetramer of two alpha and two beta subunits. Mg(2+) is required as a cofactor.

It catalyses the reaction succinate + ATP + CoA = succinyl-CoA + ADP + phosphate. The enzyme catalyses GTP + succinate + CoA = succinyl-CoA + GDP + phosphate. The protein operates within carbohydrate metabolism; tricarboxylic acid cycle; succinate from succinyl-CoA (ligase route): step 1/1. Succinyl-CoA synthetase functions in the citric acid cycle (TCA), coupling the hydrolysis of succinyl-CoA to the synthesis of either ATP or GTP and thus represents the only step of substrate-level phosphorylation in the TCA. The beta subunit provides nucleotide specificity of the enzyme and binds the substrate succinate, while the binding sites for coenzyme A and phosphate are found in the alpha subunit. In Shewanella woodyi (strain ATCC 51908 / MS32), this protein is Succinate--CoA ligase [ADP-forming] subunit beta.